Reading from the N-terminus, the 264-residue chain is Movement protein (264 aa).

The segment at 211-264 (RTKSSKRGPKNNNNLGKGRSGGRPKPKSVDEVEEEFDNLIEDEAETSVADSDSY) is disordered. The span at 241–255 (EVEEEFDNLIEDEAE) shows a compositional bias: acidic residues.

Belongs to the tobamovirus movement protein family. In terms of assembly, binds to host RBCS at the plasmodesmata; this interaction seems required for viral systemic movement. In resistant plants, interacts with host MBP2C at host microtubules; this interaction prevents virus cell to cell movement. In resistant plants, interacts with host resistance (R) protein (e.g. tomato ToMV resistance protein TM-2(2), AC Q71BG9) at the host plasma membrane; this interaction triggers host defense responses leading to programmed cell death.

The protein resides in the host cytoplasm. Its subcellular location is the host cytoskeleton. It is found in the host cell junction. The protein localises to the host plasmodesma. Its function is as follows. Transports viral genome to neighboring plant cells directly through plasmosdesmata, without any budding. The movement protein allows efficient cell to cell propagation, by bypassing the host cell wall barrier. Forms a ribonucleoprotein complex with viral RNA. Binds microtubules and modulates microtubule stability. Can bind double-stranded DNA. Triggers host hypersensitive defense reaction in incompatible plants harboring resistance (R) proteins. This is Movement protein (MP) from Antirrhinum majus (Garden snapdragon).